Here is an 85-residue protein sequence, read N- to C-terminus: ATP synthase subunit c (85 aa).

A run of 2 helical transmembrane segments spans residues 19–39 (LGAA…IGKI) and 62–82 (IIAA…CLLV).

This sequence belongs to the ATPase C chain family. In terms of assembly, F-type ATPases have 2 components, F(1) - the catalytic core - and F(0) - the membrane proton channel. F(1) has five subunits: alpha(3), beta(3), gamma(1), delta(1), epsilon(1). F(0) has three main subunits: a(1), b(2) and c(10-14). The alpha and beta chains form an alternating ring which encloses part of the gamma chain. F(1) is attached to F(0) by a central stalk formed by the gamma and epsilon chains, while a peripheral stalk is formed by the delta and b chains.

It is found in the cell inner membrane. In terms of biological role, f(1)F(0) ATP synthase produces ATP from ADP in the presence of a proton or sodium gradient. F-type ATPases consist of two structural domains, F(1) containing the extramembraneous catalytic core and F(0) containing the membrane proton channel, linked together by a central stalk and a peripheral stalk. During catalysis, ATP synthesis in the catalytic domain of F(1) is coupled via a rotary mechanism of the central stalk subunits to proton translocation. Functionally, key component of the F(0) channel; it plays a direct role in translocation across the membrane. A homomeric c-ring of between 10-14 subunits forms the central stalk rotor element with the F(1) delta and epsilon subunits. This Bacteroides fragilis (strain ATCC 25285 / DSM 2151 / CCUG 4856 / JCM 11019 / LMG 10263 / NCTC 9343 / Onslow / VPI 2553 / EN-2) protein is ATP synthase subunit c.